The primary structure comprises 115 residues: Ribonuclease P protein component (115 aa).

It belongs to the RnpA family. In terms of assembly, consists of a catalytic RNA component (M1 or rnpB) and a protein subunit.

The enzyme catalyses Endonucleolytic cleavage of RNA, removing 5'-extranucleotides from tRNA precursor.. Its function is as follows. RNaseP catalyzes the removal of the 5'-leader sequence from pre-tRNA to produce the mature 5'-terminus. It can also cleave other RNA substrates such as 4.5S RNA. The protein component plays an auxiliary but essential role in vivo by binding to the 5'-leader sequence and broadening the substrate specificity of the ribozyme. This is Ribonuclease P protein component from Natranaerobius thermophilus (strain ATCC BAA-1301 / DSM 18059 / JW/NM-WN-LF).